A 156-amino-acid chain; its full sequence is Snaclec A3 (156 aa).

The signal sequence occupies residues 1–23; the sequence is MGRSISVSFGLLVVFLSLSGTGA. Cystine bridges form between Cys-27–Cys-38, Cys-55–Cys-154, and Cys-129–Cys-146. The 122-residue stretch at 34 to 155 folds into the C-type lectin domain; sequence HEGHCYKVFN…CGQPYRFTCE (122 aa).

The protein belongs to the snaclec family. Heterodimer; disulfide-linked. As to expression, expressed by the venom gland.

It localises to the secreted. Interferes with one step of hemostasis (modulation of platelet aggregation, or coagulation cascade, for example). This chain is Snaclec A3, found in Macrovipera lebetinus (Levantine viper).